A 59-amino-acid polypeptide reads, in one-letter code: Large ribosomal subunit protein bL32 (59 aa).

Positions M1–E59 are disordered. The segment covering R49–E59 has biased composition (basic residues).

It belongs to the bacterial ribosomal protein bL32 family.

In Dechloromonas aromatica (strain RCB), this protein is Large ribosomal subunit protein bL32.